Here is a 380-residue protein sequence, read N- to C-terminus: 8-amino-7-oxononanoate synthase (380 aa).

Arg-26 lines the substrate pocket. Position 104 to 105 (Gly-104 to Tyr-105) interacts with pyridoxal 5'-phosphate. His-129 contributes to the substrate binding site. Pyridoxal 5'-phosphate is bound by residues Ser-175, Asp-200 to His-203, and Thr-232 to Lys-235. At Lys-235 the chain carries N6-(pyridoxal phosphate)lysine. Thr-345 is a substrate binding site.

Belongs to the class-II pyridoxal-phosphate-dependent aminotransferase family. BioF subfamily. Homodimer. It depends on pyridoxal 5'-phosphate as a cofactor.

The enzyme catalyses 6-carboxyhexanoyl-[ACP] + L-alanine + H(+) = (8S)-8-amino-7-oxononanoate + holo-[ACP] + CO2. It functions in the pathway cofactor biosynthesis; biotin biosynthesis. Its function is as follows. Catalyzes the decarboxylative condensation of pimeloyl-[acyl-carrier protein] and L-alanine to produce 8-amino-7-oxononanoate (AON), [acyl-carrier protein], and carbon dioxide. In Mycolicibacterium gilvum (strain PYR-GCK) (Mycobacterium gilvum (strain PYR-GCK)), this protein is 8-amino-7-oxononanoate synthase.